The sequence spans 332 residues: ADP-L-glycero-D-manno-heptose-6-epimerase (332 aa).

Residues 11–12, 32–33, lysine 39, lysine 54, 76–80, and asparagine 93 contribute to the NADP(+) site; these read FI, DN, and EGACS. Tyrosine 140 acts as the Proton acceptor in catalysis. Lysine 144 provides a ligand contact to NADP(+). Asparagine 170 is a substrate binding site. NADP(+) contacts are provided by valine 171 and lysine 179. Lysine 179 acts as the Proton acceptor in catalysis. Substrate is bound by residues arginine 181, histidine 188, 202–205, arginine 215, and tyrosine 294; that span reads FEGS.

This sequence belongs to the NAD(P)-dependent epimerase/dehydratase family. HldD subfamily. As to quaternary structure, homopentamer. Requires NADP(+) as cofactor.

It catalyses the reaction ADP-D-glycero-beta-D-manno-heptose = ADP-L-glycero-beta-D-manno-heptose. It functions in the pathway nucleotide-sugar biosynthesis; ADP-L-glycero-beta-D-manno-heptose biosynthesis; ADP-L-glycero-beta-D-manno-heptose from D-glycero-beta-D-manno-heptose 7-phosphate: step 4/4. In terms of biological role, catalyzes the interconversion between ADP-D-glycero-beta-D-manno-heptose and ADP-L-glycero-beta-D-manno-heptose via an epimerization at carbon 6 of the heptose. The sequence is that of ADP-L-glycero-D-manno-heptose-6-epimerase from Dechloromonas aromatica (strain RCB).